Reading from the N-terminus, the 236-residue chain is Three prime repair exonuclease 2 (236 aa).

Residues aspartate 14 and glutamate 16 each contribute to the Mg(2+) site. Substrate-binding positions include 16 to 17 and tyrosine 122; that span reads EA. Histidine 188 functions as the Proton donor/acceptor in the catalytic mechanism. Aspartate 193 lines the Mg(2+) pocket. Aspartate 193 contacts substrate.

It belongs to the exonuclease superfamily. TREX family. In terms of assembly, homodimer. Requires Mg(2+) as cofactor. Detected in heart, breast, prostate, skeletal muscle, testis, uterus, bone marrow, colon, small intestine, stomach and thymus.

The protein localises to the nucleus. The catalysed reaction is Exonucleolytic cleavage in the 3'- to 5'-direction to yield nucleoside 5'-phosphates.. Functionally, exonuclease with a preference for double-stranded DNA with mismatched 3' termini. May play a role in DNA repair. This Homo sapiens (Human) protein is Three prime repair exonuclease 2 (TREX2).